The primary structure comprises 341 residues: Mediator of RNA polymerase II transcription subunit 18 (341 aa).

The disordered stretch occupies residues 139–216 (KVMDKEKVQS…KEHSEGNASQ (78 aa)). Residues 163–211 (EDKKENIKKEESGEEVKGSGEEVKGSGEEVKGSGEEAKKSGEEAKEHSE) are compositionally biased toward basic and acidic residues.

Belongs to the Mediator complex subunit 18 family. Component of the Mediator complex.

It localises to the nucleus. Functionally, component of the Mediator complex, a coactivator involved in the regulated transcription of nearly all RNA polymerase II-dependent genes. Mediator functions as a bridge to convey information from gene-specific regulatory proteins to the basal RNA polymerase II transcription machinery. Mediator is recruited to promoters by direct interactions with regulatory proteins and serves as a scaffold for the assembly of a functional preinitiation complex with RNA polymerase II and the general transcription factors. The sequence is that of Mediator of RNA polymerase II transcription subunit 18 (SRB5) from Debaryomyces hansenii (strain ATCC 36239 / CBS 767 / BCRC 21394 / JCM 1990 / NBRC 0083 / IGC 2968) (Yeast).